Here is a 373-residue protein sequence, read N- to C-terminus: D-amino-acid transaminase, chloroplastic (373 aa).

The transit peptide at methionine 1–leucine 57 directs the protein to the chloroplast. Residue arginine 128 coordinates pyridoxal 5'-phosphate. Lysine 222 functions as the Proton acceptor in the catalytic mechanism. N6-(pyridoxal phosphate)lysine is present on lysine 222. Glutamate 255 provides a ligand contact to pyridoxal 5'-phosphate.

The protein belongs to the class-IV pyridoxal-phosphate-dependent aminotransferase family. As to quaternary structure, homodimer. The cofactor is pyridoxal 5'-phosphate.

The protein localises to the plastid. The protein resides in the chloroplast. The enzyme catalyses D-alanine + 2-oxoglutarate = D-glutamate + pyruvate. It catalyses the reaction 4-amino-4-deoxychorismate = 4-aminobenzoate + pyruvate + H(+). It participates in cofactor biosynthesis; tetrahydrofolate biosynthesis; 4-aminobenzoate from chorismate: step 2/2. With respect to regulation, inhibited by hydroxylamine or amino-oxyacetic acid. Its function is as follows. Amino acid aminotransferase showing activity for D-Asp and D-Ala as amino donors with 2-oxoglutarate as an amino acceptor. Can also use D-Met, D-Tyr, D-Phe, D-Gln, D-Trp and D-Asn as substrates, but no activity with L-Asp, L-Ala, L-Leu, L-Ile or L-Val. Also catalyzes the reverse reaction where an amino group is transferred from D-Glu to pyruvate or oxaloacetate to produce D-Ala or D-Asp, respectively. Also involved in folate biosynthesis, acting as an aminodeoxychorismate lyase converting 4-amino-4-deoxychorismate (ADC) to p-aminobenzoate (PABA). In Arabidopsis thaliana (Mouse-ear cress), this protein is D-amino-acid transaminase, chloroplastic.